We begin with the raw amino-acid sequence, 417 residues long: Serine hydroxymethyltransferase 2 (417 aa).

(6S)-5,6,7,8-tetrahydrofolate contacts are provided by residues Leu121 and 125–127 (GHL). Position 230 is an N6-(pyridoxal phosphate)lysine (Lys230). Residue 355–357 (SPF) participates in (6S)-5,6,7,8-tetrahydrofolate binding.

The protein belongs to the SHMT family. As to quaternary structure, homodimer. Pyridoxal 5'-phosphate is required as a cofactor.

It is found in the cytoplasm. It catalyses the reaction (6R)-5,10-methylene-5,6,7,8-tetrahydrofolate + glycine + H2O = (6S)-5,6,7,8-tetrahydrofolate + L-serine. It functions in the pathway one-carbon metabolism; tetrahydrofolate interconversion. Its pathway is amino-acid biosynthesis; glycine biosynthesis; glycine from L-serine: step 1/1. Its function is as follows. Catalyzes the reversible interconversion of serine and glycine with tetrahydrofolate (THF) serving as the one-carbon carrier. This reaction serves as the major source of one-carbon groups required for the biosynthesis of purines, thymidylate, methionine, and other important biomolecules. Also exhibits THF-independent aldolase activity toward beta-hydroxyamino acids, producing glycine and aldehydes, via a retro-aldol mechanism. The protein is Serine hydroxymethyltransferase 2 of Colwellia psychrerythraea (strain 34H / ATCC BAA-681) (Vibrio psychroerythus).